Consider the following 221-residue polypeptide: Cytidylate kinase 1 (221 aa).

7–15 (GPSASGKSS) contacts ATP.

It belongs to the cytidylate kinase family. Type 1 subfamily.

It is found in the cytoplasm. It catalyses the reaction CMP + ATP = CDP + ADP. The enzyme catalyses dCMP + ATP = dCDP + ADP. The sequence is that of Cytidylate kinase 1 from Borreliella burgdorferi (strain ATCC 35210 / DSM 4680 / CIP 102532 / B31) (Borrelia burgdorferi).